The sequence spans 326 residues: Peroxidase 46 (326 aa).

A signal peptide spans 1-27 (MASSYRINCSTLLHLLMFLSSLLTSSA). N-linked (GlcNAc...) asparagine glycosylation occurs at Asn28. 4 disulfides stabilise this stretch: Cys38–Cys114, Cys71–Cys76, Cys120–Cys322, and Cys199–Cys233. His69 functions as the Proton acceptor in the catalytic mechanism. Asp70, Val73, Gly75, Asp77, and Ser79 together coordinate Ca(2+). An N-linked (GlcNAc...) asparagine glycan is attached at Asn85. Residue His192 participates in heme b binding. Residue Thr193 participates in Ca(2+) binding. 3 residues coordinate Ca(2+): Asp246, Thr249, and Asp254. N-linked (GlcNAc...) asparagine glycosylation is present at Asn278.

This sequence belongs to the peroxidase family. Classical plant (class III) peroxidase subfamily. The cofactor is heme b. Requires Ca(2+) as cofactor.

The protein localises to the secreted. The catalysed reaction is 2 a phenolic donor + H2O2 = 2 a phenolic radical donor + 2 H2O. In terms of biological role, removal of H(2)O(2), oxidation of toxic reductants, biosynthesis and degradation of lignin, suberization, auxin catabolism, response to environmental stresses such as wounding, pathogen attack and oxidative stress. These functions might be dependent on each isozyme/isoform in each plant tissue. The protein is Peroxidase 46 (PER46) of Arabidopsis thaliana (Mouse-ear cress).